Here is a 590-residue protein sequence, read N- to C-terminus: Aspartate--tRNA(Asp/Asn) ligase (590 aa).

Glutamate 175 contributes to the L-aspartate binding site. Positions 199 to 202 are aspartate; it reads QQYK. Arginine 221 and histidine 450 together coordinate L-aspartate. Position 221 to 223 (221 to 223) interacts with ATP; the sequence is RDE. Glutamate 484 lines the ATP pocket. Arginine 491 contributes to the L-aspartate binding site. 536–539 contacts ATP; the sequence is GIDR.

It belongs to the class-II aminoacyl-tRNA synthetase family. Type 1 subfamily. Homodimer.

The protein localises to the cytoplasm. It carries out the reaction tRNA(Asx) + L-aspartate + ATP = L-aspartyl-tRNA(Asx) + AMP + diphosphate. Its function is as follows. Aspartyl-tRNA synthetase with relaxed tRNA specificity since it is able to aspartylate not only its cognate tRNA(Asp) but also tRNA(Asn). Reaction proceeds in two steps: L-aspartate is first activated by ATP to form Asp-AMP and then transferred to the acceptor end of tRNA(Asp/Asn). This Azorhizobium caulinodans (strain ATCC 43989 / DSM 5975 / JCM 20966 / LMG 6465 / NBRC 14845 / NCIMB 13405 / ORS 571) protein is Aspartate--tRNA(Asp/Asn) ligase.